Here is a 324-residue protein sequence, read N- to C-terminus: tRNA(Ile)-lysidine synthase (324 aa).

Position 33 to 38 (33 to 38) interacts with ATP; that stretch reads SGGPDS.

It belongs to the tRNA(Ile)-lysidine synthase family.

The protein localises to the cytoplasm. The catalysed reaction is cytidine(34) in tRNA(Ile2) + L-lysine + ATP = lysidine(34) in tRNA(Ile2) + AMP + diphosphate + H(+). In terms of biological role, ligates lysine onto the cytidine present at position 34 of the AUA codon-specific tRNA(Ile) that contains the anticodon CAU, in an ATP-dependent manner. Cytidine is converted to lysidine, thus changing the amino acid specificity of the tRNA from methionine to isoleucine. This chain is tRNA(Ile)-lysidine synthase, found in Thermobifida fusca (strain YX).